Reading from the N-terminus, the 98-residue chain is Hainantoxin-XVII.3 (98 aa).

The N-terminal stretch at 1-40 (MTTVGVSLFRRSPEKITMKIATFLGLSFLLIASYFLICEA) is a signal peptide. A propeptide spanning residues 41–64 (QHPGFQELLILEENMRDPENSKER) is cleaved from the precursor. Disulfide bonds link C66–C81, C73–C85, and C80–C95.

This sequence belongs to the hainantoxin family. 17 subfamily. Expressed by the venom gland.

Its subcellular location is the secreted. Its function is as follows. Inhibits with low potency Kv1.2/KCNA2 and Kv1.3/KCNA3 voltage-gated potassium channels. The sequence is that of Hainantoxin-XVII.3 from Cyriopagopus hainanus (Chinese bird spider).